A 79-amino-acid chain; its full sequence is Small ribosomal subunit protein bS18 (79 aa).

The protein belongs to the bacterial ribosomal protein bS18 family. Part of the 30S ribosomal subunit. Forms a tight heterodimer with protein bS6.

Functionally, binds as a heterodimer with protein bS6 to the central domain of the 16S rRNA, where it helps stabilize the platform of the 30S subunit. This is Small ribosomal subunit protein bS18 from Ureaplasma parvum serovar 3 (strain ATCC 27815 / 27 / NCTC 11736).